Consider the following 791-residue polypeptide: Vezatin (791 aa).

2 helical membrane-spanning segments follow: residues 138–158 (IATPNIWEMSVLFAFLSALAA) and 163–183 (SISSSLVWGPSLILFAAFTVL). Residues 435-464 (VRSLQLHLKALLNEVIILEDELEKLSSCKE) adopt a coiled-coil conformation. The segment covering 752-769 (GDEWDDDDDDNDNDDDNY) has biased composition (acidic residues). Residues 752 to 791 (GDEWDDDDDDNDNDDDNYDQVKNVESHEKERNNVSLQLEE) form a disordered region. Basic and acidic residues predominate over residues 773–783 (KNVESHEKERN).

It belongs to the vezatin family. As to quaternary structure, interacts with myosin VIIa and the cadherin-catenins complex.

Its subcellular location is the cell membrane. The protein resides in the cell junction. The protein localises to the adherens junction. It is found in the nucleus. Its function is as follows. Plays a pivotal role in the establishment of adherens junctions and their maintenance in adult life. The polypeptide is Vezatin (vezt) (Xenopus tropicalis (Western clawed frog)).